A 286-amino-acid chain; its full sequence is Elongation factor Ts (286 aa).

Positions 82 to 85 (TDFV) are involved in Mg(2+) ion dislocation from EF-Tu. The interval 212–286 (VAAQTGQKVE…SPSKKGKKKK (75 aa)) is disordered. Positions 215–227 (QTGQKVEQPQAAQ) are enriched in polar residues. The segment covering 253 to 269 (ETDSPAAETTTEPPKTT) has biased composition (low complexity).

It belongs to the EF-Ts family.

Its subcellular location is the cytoplasm. In terms of biological role, associates with the EF-Tu.GDP complex and induces the exchange of GDP to GTP. It remains bound to the aminoacyl-tRNA.EF-Tu.GTP complex up to the GTP hydrolysis stage on the ribosome. This chain is Elongation factor Ts, found in Gloeothece citriformis (strain PCC 7424) (Cyanothece sp. (strain PCC 7424)).